The following is a 255-amino-acid chain: Type III pantothenate kinase (255 aa).

6–13 (DVGNSYTM) contributes to the ATP binding site. A substrate-binding site is contributed by 107–110 (GADR). The Proton acceptor role is filled by Asp-109. Residue Asp-129 participates in K(+) binding. Thr-132 is a binding site for ATP. Thr-183 lines the substrate pocket.

This sequence belongs to the type III pantothenate kinase family. In terms of assembly, homodimer. NH4(+) serves as cofactor. K(+) is required as a cofactor.

The protein localises to the cytoplasm. The enzyme catalyses (R)-pantothenate + ATP = (R)-4'-phosphopantothenate + ADP + H(+). Its pathway is cofactor biosynthesis; coenzyme A biosynthesis; CoA from (R)-pantothenate: step 1/5. Its function is as follows. Catalyzes the phosphorylation of pantothenate (Pan), the first step in CoA biosynthesis. This is Type III pantothenate kinase from Petrotoga mobilis (strain DSM 10674 / SJ95).